The chain runs to 57 residues: uncharacterized protein (57 aa).

The segment at 26–57 (VVSTRKRLKQNTNTPPHYDTSEDEDEDNYYNY) is disordered. Acidic residues predominate over residues 46–57 (SEDEDEDNYYNY).

This is an uncharacterized protein from Autographa californica nuclear polyhedrosis virus (AcMNPV).